The sequence spans 365 residues: MDNYEYTELLKNLSKKMSNITGVVEPDKLYKRVAQIDELENSQDFWNDSSNAALVQKDKTQCERKLKKYNLAKNAIDDAKELYEMAKEENDEDLIAECFNGAQHIEDLIRTMEIEVLLSEETDGNNAILSIHPGAGGTESQDWASILLRMYKRFAERRGWSVEVLDYQAGDEAGIKDVSLLISGENAYGYLKVENGIHRLVRISPFDSNAKRHTSFSSVMVSPEVDDDINIVIEDRDIRVDTYRSSGAGGQHVNKTESAIRITHIATGVVVQCQNDRSQHKNRATAMKMLKSRLYELELENQKAEIAGIAKSEIGWGHQIRSYVMQPYQQIKDTRSNIAYSNVSAILDGDIDKMIEDVLISQNRS.

The residue at position 251 (Gln251) is an N5-methylglutamine.

It belongs to the prokaryotic/mitochondrial release factor family. Methylated by PrmC. Methylation increases the termination efficiency of RF2.

The protein resides in the cytoplasm. Its function is as follows. Peptide chain release factor 2 directs the termination of translation in response to the peptide chain termination codons UGA and UAA. The sequence is that of Peptide chain release factor 2 from Sulfurimonas denitrificans (strain ATCC 33889 / DSM 1251) (Thiomicrospira denitrificans (strain ATCC 33889 / DSM 1251)).